We begin with the raw amino-acid sequence, 63 residues long: Phylloseptin-Az1 (63 aa).

The first 19 residues, 1 to 19 (LKKSLFLVVFLGLATLSIC), serve as a signal peptide directing secretion. Positions 20–41 (EEEKRETEEEEYNQGEDDKSEE) are excised as a propeptide. The residue at position 62 (Phe-62) is a Phenylalanine amide.

In terms of tissue distribution, expressed by the skin glands.

The protein localises to the secreted. In terms of biological role, has antimicrobial activity. The protein is Phylloseptin-Az1 of Pithecopus azureus (Orange-legged monkey tree frog).